The sequence spans 203 residues: Sarcosine oxidase subunit gamma (203 aa).

The protein belongs to the SoxG family. Heterotetramer composed of subunits alpha (SoxA), beta (SoxB), gamma (SoxG) and delta (SoxD).

The protein resides in the cytoplasm. It catalyses the reaction sarcosine + (6S)-5,6,7,8-tetrahydrofolate + O2 = (6R)-5,10-methylene-5,6,7,8-tetrahydrofolate + glycine + H2O2. It carries out the reaction sarcosine + O2 + H2O = formaldehyde + glycine + H2O2. In the presence of tetrahydrofolate, catalyzes the oxidative demethylation of sarcosine to yield glycine, 5,10-methylenetetrahydrofolate and hydrogen peroxide. In the absence of tetrahydrofolate, catalyzes the oxidative demethylation of sarcosine to yield glycine, formaldehyde and hydrogen peroxide. This chain is Sarcosine oxidase subunit gamma, found in Corynebacterium sp. (strain P-1).